We begin with the raw amino-acid sequence, 32 residues long: Secreted protein F2 (32 aa).

The protein localises to the secreted. The polypeptide is Secreted protein F2 (Globisporangium hypogynum (Pythium hypogynum)).